The following is a 991-amino-acid chain: Gingipain R1 (991 aa).

The N-terminal stretch at M1–Q24 is a signal peptide. Positions Q25–R227 are excised as a propeptide. Ca(2+) contacts are provided by D305, V327, D330, Y332, E334, E388, and H393. H438 serves as the catalytic Proton donor. C471 acts as the Nucleophile in catalysis. The Ca(2+) site is built by F476, E485, D519, E520, E523, and H529.

The protein belongs to the peptidase C25 family.

Its subcellular location is the secreted. It catalyses the reaction Hydrolysis of proteins and small molecule substrates, with a preference for Arg in P1.. With respect to regulation, requires cysteine for activation and Ca(2+) and/or Mg(2+) for stabilization. It is stimulated by glycine-containing dipeptides. It is resistant to inhibition by proteinase inhibitors in human plasma. In terms of biological role, thiol protease. Acts synergistically with RgpB to catalyze the maturation of fimbrial subunits, such as FimA. Its proteolytic activity is a major factor in both periodontal tissue destruction and in evasion of host defense mechanisms. This is Gingipain R1 (rgpA) from Porphyromonas gingivalis (Bacteroides gingivalis).